The chain runs to 210 residues: Small ribosomal subunit protein uS4 (210 aa).

The 63-residue stretch at Arg99 to Ala161 folds into the S4 RNA-binding domain.

It belongs to the universal ribosomal protein uS4 family. In terms of assembly, part of the 30S ribosomal subunit. Contacts protein S5. The interaction surface between S4 and S5 is involved in control of translational fidelity.

In terms of biological role, one of the primary rRNA binding proteins, it binds directly to 16S rRNA where it nucleates assembly of the body of the 30S subunit. Functionally, with S5 and S12 plays an important role in translational accuracy. This is Small ribosomal subunit protein uS4 from Solibacter usitatus (strain Ellin6076).